We begin with the raw amino-acid sequence, 184 residues long: Cell number regulator 5 (184 aa).

Residues 91-111 traverse the membrane as a helical segment; the sequence is MLWGLLTSLCCVFTGGLVLAV. The disordered stretch occupies residues 162–184; it reads RTGSGSSPAPNVTPPPVQTMDEL.

It belongs to the cornifelin family. Expressed in roots, leaves, stalks, immature ears, endosperm and pollen.

Its subcellular location is the membrane. This is Cell number regulator 5 (CNR5) from Zea mays (Maize).